Reading from the N-terminus, the 356-residue chain is Histidinol-phosphate aminotransferase (356 aa).

Residue Lys-214 is modified to N6-(pyridoxal phosphate)lysine.

Belongs to the class-II pyridoxal-phosphate-dependent aminotransferase family. Histidinol-phosphate aminotransferase subfamily. In terms of assembly, homodimer. Requires pyridoxal 5'-phosphate as cofactor.

The enzyme catalyses L-histidinol phosphate + 2-oxoglutarate = 3-(imidazol-4-yl)-2-oxopropyl phosphate + L-glutamate. The protein operates within amino-acid biosynthesis; L-histidine biosynthesis; L-histidine from 5-phospho-alpha-D-ribose 1-diphosphate: step 7/9. The sequence is that of Histidinol-phosphate aminotransferase from Escherichia coli O8 (strain IAI1).